The primary structure comprises 249 residues: Small ribosomal subunit protein uS2 (249 aa).

This sequence belongs to the universal ribosomal protein uS2 family.

The polypeptide is Small ribosomal subunit protein uS2 (Listeria innocua serovar 6a (strain ATCC BAA-680 / CLIP 11262)).